The primary structure comprises 128 residues: Flagellar assembly factor FliW 1 (128 aa).

Belongs to the FliW family. In terms of assembly, interacts with translational regulator CsrA and flagellin(s).

The protein resides in the cytoplasm. Functionally, acts as an anti-CsrA protein, binds CsrA and prevents it from repressing translation of its target genes, one of which is flagellin. Binds to flagellin and participates in the assembly of the flagellum. This Wolinella succinogenes (strain ATCC 29543 / DSM 1740 / CCUG 13145 / JCM 31913 / LMG 7466 / NCTC 11488 / FDC 602W) (Vibrio succinogenes) protein is Flagellar assembly factor FliW 1.